The following is a 265-amino-acid chain: Hydroxyethylthiazole kinase (265 aa).

Substrate is bound at residue Met-36. 2 residues coordinate ATP: Lys-112 and Ser-160. Gly-187 lines the substrate pocket.

The protein belongs to the Thz kinase family. Requires Mg(2+) as cofactor.

It catalyses the reaction 5-(2-hydroxyethyl)-4-methylthiazole + ATP = 4-methyl-5-(2-phosphooxyethyl)-thiazole + ADP + H(+). The protein operates within cofactor biosynthesis; thiamine diphosphate biosynthesis; 4-methyl-5-(2-phosphoethyl)-thiazole from 5-(2-hydroxyethyl)-4-methylthiazole: step 1/1. Catalyzes the phosphorylation of the hydroxyl group of 4-methyl-5-beta-hydroxyethylthiazole (THZ). The chain is Hydroxyethylthiazole kinase from Clostridium perfringens (strain 13 / Type A).